A 130-amino-acid polypeptide reads, in one-letter code: MSWQSYVDSFLVGAGKGMGGAIIGLQGGVWAASANCTPSAQESVAIGTACASNIAGLQQTGVVIGGKKYMITRVDADEGTAMGKKGAEGISIYKTKQAVIIGYFSDASVSAGQNSDATYKCAKYLMDAGY.

It belongs to the profilin family. In terms of assembly, interacts with actin. Interacts with RHO1 (GTP-bound form).

It is found in the cytoplasm. The protein resides in the cytoskeleton. Its subcellular location is the cell projection. It localises to the phagocytic cup. The protein localises to the cytoplasmic vesicle. It is found in the phagosome. In terms of biological role, binds to actin and affects the structure of the cytoskeleton. At high concentrations, profilin prevents the polymerization of actin, whereas it enhances it at low concentrations. By binding to PIP2, it inhibits the formation of IP3 and DG. This chain is Profilin-1, found in Entamoeba histolytica (strain ATCC 30459 / HM-1:IMSS / ABRM).